Reading from the N-terminus, the 536-residue chain is Caspase recruitment domain-containing protein 9 (536 aa).

Serine 2 carries the post-translational modification Phosphoserine. Residues aspartate 3, cysteine 10, and histidine 73 each coordinate Zn(2+). Positions 6 to 98 (NDDECWSALE…QLYRKVTGKE (93 aa)) constitute a CARD domain. The tract at residues 99 to 116 (PARVFSMIIDASGESGLT) is linker. Coiled-coil stretches lie at residues 117 to 277 (QLLM…HRNS) and 303 to 420 (SLRK…QLDM). A Glycyl lysine isopeptide (Lys-Gly) (interchain with G-Cter in ubiquitin) cross-link involves residue lysine 125. A Phosphothreonine modification is found at threonine 231. Serine 277 carries the post-translational modification Phosphoserine. Phosphoserine is present on residues serine 424, serine 425, serine 431, serine 451, serine 461, serine 483, and serine 498. The segment at 425-451 (SDLEDSSPRNSQELSLPQDLEEDAQLS) is disordered. The interval 472–536 (KHLSQTHDTV…GSDNTDTEGS (65 aa)) is disordered. The span at 487 to 502 (PPEKERRRLKESFENY) shows a compositional bias: basic and acidic residues. Phosphothreonine; by CK2 occurs at positions 531 and 533.

Monomer. Homodimer; homodimerization is mediated by the CARD domain which forms an extensive interaction with the adjacent linker and coiled-coil regions; leads to an autoinhibited state. Homomultimer; polymerizes following activation, forming a nucleating helical template that seeds BCL10-filament formation via a CARD-CARD interaction. Interacts (via CARD domain) with BCL10 (via CARD domain); interaction takes place following CARD9 activation and polymerization, leading to the formation of a filamentous CBM complex assembly. Component of a CBM complex (CARD9-BCL10, MALT1), composed of CARD9, BCL10 and MALT1. Interacts with RASGRF1. Interacts with NOD2 (via NACHT domain); interaction is direct. Interacts with RIPK2. Interacts with VHL; without leading to protein degradation. Post-translationally, phosphorylated at Thr-231 by PRKCD downstream of C-type lectin receptors activation: phosphorylation promotes interaction with BCL10, followed by activation of NF-kappa-B and MAP kinase p38 pathways. Phosphorylated at Thr-531 and Thr-533 by CK2 following interaction with VHL, leading to inhibit the ability to activate NF-kappa-B. In terms of processing, ubiquitinated at Lys-125 via 'Lys-27'-linked ubiquitin by TRIM62 downstream of C-type lectin receptors activation; leading to CARD9 activation, followed by activation of NF-kappa-B and MAP kinase p38 pathways. Deubiquitinated at Lys-125 by USP15, inhibiting CARD9.

Its subcellular location is the cytoplasm. With respect to regulation, maintained in an autoinhibited state via homodimerization in which the CARD domain forms an extensive interaction with the adjacent linker and coiled-coil regions. Activation downstream of C-type lectin receptors, by phosphorylation by PRKCD and/or ubiquitination by TRIM62, triggers disruption of the CARD domain-coiled coil interface, CARD9 homooligomerization and BCL10 recruitment, followed by activation of NF-kappa-B and MAP kinase p38 pathways. Zinc-binding inhibits activation by stabilizing the CARD ground-state conformation and restricting its capacity to form BCL10-nucleating filaments. Its function is as follows. Adapter protein that plays a key role in innate immune response against fungi by forming signaling complexes downstream of C-type lectin receptors. CARD9-mediated signals are essential for antifungal immunity against a subset of fungi from the phylum Ascomycota. Transduces signals in myeloid cells downstream of C-type lectin receptors CLEC7A (dectin-1), CLEC6A (dectin-2) and CLEC4E (Mincle), which detect pathogen-associated molecular pattern metabolites (PAMPs), such as fungal carbohydrates, and trigger CARD9 activation. Upon activation, CARD9 homooligomerizes to form a nucleating helical template that recruits BCL10 via CARD-CARD interaction, thereby promoting polymerization of BCL10 and subsequent recruitment of MALT1: this leads to activation of NF-kappa-B and MAP kinase p38 (MAPK11, MAPK12, MAPK13 and/or MAPK14) pathways which stimulate expression of genes encoding pro-inflammatory cytokines and chemokines. CARD9 signaling in antigen-presenting cells links innate sensing of fungi to the activation of adaptive immunity and provides a cytokine milieu that induces the development and subsequent of interleukin 17-producing T helper (Th17) cells. Also involved in activation of myeloid cells via classical ITAM-associated receptors and TLR: required for TLR-mediated activation of MAPK, while it is not required for TLR-induced activation of NF-kappa-B. CARD9 can also be engaged independently of BCL10: forms a complex with RASGRF1 downstream of C-type lectin receptors, which recruits and activates HRAS, leading to ERK activation and the production of cytokines. Acts as an important regulator of the intestinal commensal fungi (mycobiota) component of the gut microbiota. Plays an essential role in antifungal immunity against dissemination of gut fungi: acts by promoting induction of antifungal IgG antibodies response in CX3CR1(+) macrophages to confer protection against disseminated C.albicans or C.auris infection. Also mediates immunity against other pathogens, such as certain bacteria, viruses and parasites; CARD9 signaling is however redundant with other innate immune responses. In response to L.monocytogenes infection, required for the production of inflammatory cytokines activated by intracellular peptidoglycan: acts by connecting NOD2 recognition of peptidoglycan to downstream activation of MAP kinases (MAPK) without activating NF-kappa-B. The sequence is that of Caspase recruitment domain-containing protein 9 from Rattus norvegicus (Rat).